We begin with the raw amino-acid sequence, 90 residues long: DNA-binding protein HU-beta (90 aa).

Belongs to the bacterial histone-like protein family. As to quaternary structure, heterodimer of an alpha and a beta chain.

Histone-like DNA-binding protein which is capable of wrapping DNA to stabilize it, and thus to prevent its denaturation under extreme environmental conditions. This chain is DNA-binding protein HU-beta (hupB), found in Pseudomonas aeruginosa (strain ATCC 15692 / DSM 22644 / CIP 104116 / JCM 14847 / LMG 12228 / 1C / PRS 101 / PAO1).